The chain runs to 244 residues: DNA repair protein RecO (244 aa).

The protein belongs to the RecO family.

Involved in DNA repair and RecF pathway recombination. This Jannaschia sp. (strain CCS1) protein is DNA repair protein RecO.